A 204-amino-acid polypeptide reads, in one-letter code: Urease accessory protein UreG (204 aa).

Position 12-19 (12-19 (GPVGSGKT)) interacts with GTP.

This sequence belongs to the SIMIBI class G3E GTPase family. UreG subfamily. Homodimer. UreD, UreF and UreG form a complex that acts as a GTP-hydrolysis-dependent molecular chaperone, activating the urease apoprotein by helping to assemble the nickel containing metallocenter of UreC. The UreE protein probably delivers the nickel.

Its subcellular location is the cytoplasm. Its function is as follows. Facilitates the functional incorporation of the urease nickel metallocenter. This process requires GTP hydrolysis, probably effectuated by UreG. The polypeptide is Urease accessory protein UreG (Pseudomonas fluorescens (strain ATCC BAA-477 / NRRL B-23932 / Pf-5)).